Consider the following 452-residue polypeptide: Nuclear distribution protein nudF 2 (452 aa).

A coiled-coil region spans residues 76–101 (ALQILDLESKVAGLQAELSSLTLTSR). WD repeat units follow at residues 123-164 (SHRD…RTLK), 166-206 (HIRA…ANIR), 210-250 (GHDH…CVKV), 253-292 (SSDAWIRDISSSFDGKWLVAGGRDQAVTVWEVATAEQKSA), 295-355 (GHEN…IKTL), 357-396 (GHDNWVRDLVFHPNGKHLISVADDKTIRCWDLSQEGKLVK), and 401-449 (AHSH…SCVR).

The protein belongs to the WD repeat LIS1/nudF family. Self-associates. Interacts with nudE and dynein.

It is found in the cytoplasm. The protein localises to the cytoskeleton. The protein resides in the spindle pole. Its function is as follows. Positively regulates the activity of the minus-end directed microtubule motor protein dynein. May enhance dynein-mediated microtubule sliding by targeting dynein to the microtubule plus end. Required for nuclear migration during vegetative growth as well as development. Required for retrograde early endosome (EE) transport from the hyphal tip. Required for localization of dynein to the mitotic spindle poles. Recruits additional proteins to the dynein complex at SPBs. The chain is Nuclear distribution protein nudF 2 from Talaromyces marneffei (strain ATCC 18224 / CBS 334.59 / QM 7333) (Penicillium marneffei).